Here is a 258-residue protein sequence, read N- to C-terminus: PHD finger protein ALFIN-LIKE 5 (258 aa).

Residues 143-205 (AKKQTKEKAP…EEEERDNTLC (63 aa)) form a disordered region. A compositionally biased stretch (polar residues) spans 152–165 (PNSTNKPNKPSSKM). Over residues 184 to 200 (DDDESGDEYADEEEEER) the composition is skewed to acidic residues. The PHD-type zinc finger occupies 202-254 (NTLCGSCGTNDGKDEFWICCDSCERWYHGKCVKITPARAEHIKHYKCPDCGNK).

This sequence belongs to the Alfin family.

The protein resides in the nucleus. In terms of biological role, histone-binding component that specifically recognizes H3 tails trimethylated on 'Lys-4' (H3K4me3), which mark transcription start sites of virtually all active genes. This Oryza sativa subsp. indica (Rice) protein is PHD finger protein ALFIN-LIKE 5.